The chain runs to 336 residues: UDP-glucose 4-epimerase (336 aa).

NAD(+) contacts are provided by residues 11–12 (YI), 31–36 (DNLINS), 58–59 (DI), 80–84 (FAGLK), Asn99, Ser124, Tyr149, Lys153, and Phe178. Substrate is bound by residues Ser124 and Tyr149. Tyr149 acts as the Proton acceptor in catalysis. Residues Asn179, 199-200 (NL), 216-218 (LVY), Arg231, and 290-293 (RPGD) each bind substrate.

This sequence belongs to the NAD(P)-dependent epimerase/dehydratase family. As to quaternary structure, homodimer. Requires NAD(+) as cofactor.

It carries out the reaction UDP-alpha-D-glucose = UDP-alpha-D-galactose. It functions in the pathway carbohydrate metabolism; galactose metabolism. Functionally, involved in the metabolism of galactose. Catalyzes the conversion of UDP-galactose (UDP-Gal) to UDP-glucose (UDP-Glc) through a mechanism involving the transient reduction of NAD. This chain is UDP-glucose 4-epimerase (galE), found in Yersinia enterocolitica.